The chain runs to 533 residues: Non-specific phospholipase C1 (533 aa).

The N-terminal stretch at 1–22 (MAFRRVLTTVILFCYLLISSQS) is a signal peptide.

The protein belongs to the bacterial phospholipase C family. Expressed in roots, leaves, stems, flowers and siliques.

The protein resides in the secreted. The protein is Non-specific phospholipase C1 (NPC1) of Arabidopsis thaliana (Mouse-ear cress).